The chain runs to 314 residues: Ribosomal RNA small subunit methyltransferase H (314 aa).

S-adenosyl-L-methionine-binding positions include 36–38 (AGH), aspartate 56, phenylalanine 83, aspartate 104, and glutamine 111.

Belongs to the methyltransferase superfamily. RsmH family.

The protein localises to the cytoplasm. It catalyses the reaction cytidine(1402) in 16S rRNA + S-adenosyl-L-methionine = N(4)-methylcytidine(1402) in 16S rRNA + S-adenosyl-L-homocysteine + H(+). Its function is as follows. Specifically methylates the N4 position of cytidine in position 1402 (C1402) of 16S rRNA. This is Ribosomal RNA small subunit methyltransferase H from Brevibacillus brevis (strain 47 / JCM 6285 / NBRC 100599).